A 498-amino-acid chain; its full sequence is DEAD-box ATP-dependent RNA helicase 6 (498 aa).

The disordered stretch occupies residues Met1–Gln109. Residues Gln33–Tyr49 are compositionally biased toward basic residues. Composition is skewed to low complexity over residues Val50–His61 and Ala75–Ala86. A Q motif motif is present at residues Asn124–Glu152. The region spanning Ile155–Ile325 is the Helicase ATP-binding domain. Ala168–Thr175 lines the ATP pocket. A DEAD box motif is present at residues Asp273–Asp276. The 161-residue stretch at Gly335 to Ile495 folds into the Helicase C-terminal domain.

This sequence belongs to the DEAD box helicase family. DDX6/DHH1 subfamily.

The protein localises to the cytoplasm. It is found in the P-body. The catalysed reaction is ATP + H2O = ADP + phosphate + H(+). Functionally, ATP-dependent RNA helicase involved in mRNA turnover, and more specifically in mRNA decapping. The sequence is that of DEAD-box ATP-dependent RNA helicase 6 from Oryza sativa subsp. japonica (Rice).